Here is a 495-residue protein sequence, read N- to C-terminus: UDP-glycosyltransferase 73C9 (495 aa).

Residue 23 to 26 (GHMI) coordinates UDP-alpha-D-glucose. The Proton acceptor role is filled by H24. The active-site Charge relay is D129. Residues 355–358 (WSPQ), 373–381 (HCGWNSTLE), and 397–398 (DQ) contribute to the UDP-alpha-D-glucose site.

Belongs to the UDP-glycosyltransferase family.

In terms of biological role, possesses very weak glucosyltransferase activity toward 2,4,5-trichlorophenol (TCP), when assayed with high concentrations of TCP. The polypeptide is UDP-glycosyltransferase 73C9 (Barbarea vulgaris (Yellow rocket)).